The chain runs to 464 residues: Argininosuccinate lyase (464 aa).

This sequence belongs to the lyase 1 family. Argininosuccinate lyase subfamily.

The protein localises to the cytoplasm. The catalysed reaction is 2-(N(omega)-L-arginino)succinate = fumarate + L-arginine. The protein operates within amino-acid biosynthesis; L-arginine biosynthesis; L-arginine from L-ornithine and carbamoyl phosphate: step 3/3. This chain is Argininosuccinate lyase, found in Pseudomonas syringae pv. tomato (strain ATCC BAA-871 / DC3000).